Here is a 422-residue protein sequence, read N- to C-terminus: L-threonine dehydratase biosynthetic IlvA (422 aa).

K56 carries the post-translational modification N6-(pyridoxal phosphate)lysine. Pyridoxal 5'-phosphate-binding positions include N83, 189-193 (GGGGL), and S315. Positions 339 to 413 (HYFILNFPQR…FDPSNIYINE (75 aa)) constitute an ACT-like domain.

The protein belongs to the serine/threonine dehydratase family. Homotetramer. Pyridoxal 5'-phosphate serves as cofactor.

The enzyme catalyses L-threonine = 2-oxobutanoate + NH4(+). It functions in the pathway amino-acid biosynthesis; L-isoleucine biosynthesis; 2-oxobutanoate from L-threonine: step 1/1. Its function is as follows. Catalyzes the anaerobic formation of alpha-ketobutyrate and ammonia from threonine in a two-step reaction. The first step involved a dehydration of threonine and a production of enamine intermediates (aminocrotonate), which tautomerizes to its imine form (iminobutyrate). Both intermediates are unstable and short-lived. The second step is the nonenzymatic hydrolysis of the enamine/imine intermediates to form 2-ketobutyrate and free ammonia. In the low water environment of the cell, the second step is accelerated by RidA. The polypeptide is L-threonine dehydratase biosynthetic IlvA (ilvA) (Staphylococcus aureus (strain MSSA476)).